We begin with the raw amino-acid sequence, 647 residues long: MGKIRKLDDQLSNLIAAGEVVERPASVVKELVENSIDANSTSIEIHLEEAGLSKIRIIDNGDGIAEEDCIVAFERHATSKIKDENDLFRIRTLGFRGEALPSIASVSELELITSTGDAPGTHLIIKGGDIIKQEKTASRKGTDITVQNLFFNTPARLKYMKTIHTELGNITDIVYRIAMSHPEVSLKLFHNEKKLLHTSGNGDVRQVLASIYSIQVAKKLVPIEAESLDFTIKGYVTLPEVTRASRNYMSTIVNGRYVRNFVLMKAIQQGYHTLLPVGRYPIGFLSIEMDPMLVDVNVHPAKLEVRFSKEQELLKLIEETLQAAFKKIQLIPDAGVTTKKKEKDESVQEQFKFEHAKPKEPSMPEIILPTGMDEKQEEPLAVKQPAQLWQPPKQEWQPPQSLVREEQSWQPSTKSIIEEPIREEKSWDSNDEDFELEELEEEVQEIKEIEMNGNDLPPLYPIGQMHGTYIFAQNDKGLYMIDQHAAQERINYEYFRDKVGRVAQEVQELLVPYRIDLSLTEFLRVEEQLEELKKVGLFLEQFGHQSFIVRSHPTWFPKGQETEIIDEMMEQVVKLKKVDIKKLREEAAIMMSCKASIKANQYLTNDQIFALLEELRTTTNPYTCPHGRPILVHHSTYELEKMFKRVM.

Belongs to the DNA mismatch repair MutL/HexB family.

Its function is as follows. This protein is involved in the repair of mismatches in DNA. It is required for dam-dependent methyl-directed DNA mismatch repair. May act as a 'molecular matchmaker', a protein that promotes the formation of a stable complex between two or more DNA-binding proteins in an ATP-dependent manner without itself being part of a final effector complex. The polypeptide is DNA mismatch repair protein MutL (Bacillus cereus (strain ATCC 10987 / NRS 248)).